Reading from the N-terminus, the 471-residue chain is Putative multidrug resistance protein MdtD (471 aa).

13 helical membrane-spanning segments follow: residues Leu12–Ala32, Met49–Ala69, Ile77–Thr97, Val106–Ile126, Phe138–Val158, Trp165–Met185, Phe195–Asp215, Leu220–Leu240, Phe263–Met283, Val286–Met306, Leu342–Leu362, Leu393–Leu413, and Val431–Ser451.

Belongs to the major facilitator superfamily. TCR/Tet family.

The protein resides in the cell inner membrane. The polypeptide is Putative multidrug resistance protein MdtD (Klebsiella pneumoniae (strain 342)).